A 492-amino-acid polypeptide reads, in one-letter code: MGGRRGPNRTSYCRNPLCEPGSSGGSSGSHTSSASVTSVRSRTRSSSGTGLSSPPLATQTVVPLQHCKIPELPVQASILFELQLFFCQLIALFVHYINIYKTVWWYPPSHPPSHTSLNFHLIDFNLLMVTTIVLGRRFIGSIVKEASQRGKVSLFRSILLFLTRFTVLTATGWSLCRSLIHLFRTYSFLNLLFLCYPFGMYIPFLQLNCDLRKTSLFNHMASMGPREAVSGLAKSRDYLLTLRETWKQHTRQLYGPDAMPTHACCLSPSLIRSEVEFLKMDFNWRMKEVLVSSMLSAYYVAFVPVWFVKNTHYYDKRWSCELFLLVSISTSVILMQHLLPASYCDLLHKAAAHLGCWQKVDPALCSNVLQHPWTEECMWPQGVLVKHSKNVYKAVGHYNVAIPSDVSHFRFHFFFSKPLRILNILLLLEGAVIVYQLYSLMSSEKWHQTISLALILFSNYYAFFKLLRDRLVLGKAYSYSASPQRDLDHRFS.

The disordered stretch occupies residues 1–54; sequence MGGRRGPNRTSYCRNPLCEPGSSGGSSGSHTSSASVTSVRSRTRSSSGTGLSSP. Asn-8 carries N-linked (GlcNAc...) asparagine glycosylation. Low complexity predominate over residues 28–53; sequence GSHTSSASVTSVRSRTRSSSGTGLSS. Helical transmembrane passes span 77–97, 115–135, 153–175, 185–205, 288–308, 322–342, 421–441, and 447–467; these read SILF…VHYI, TSLN…IVLG, SLFR…GWSL, TYSF…IPFL, EVLV…VWFV, LFLL…LPAS, ILNI…YSLM, and HQTI…FKLL.

Belongs to the TMEM39 family.

The protein localises to the endoplasmic reticulum membrane. May protect the cells against DNA damage caused by exposure to the cold-warming stress and facilitates tissue damage repair during the recovery phase. The sequence is that of Transmembrane protein 39B from Homo sapiens (Human).